The chain runs to 58 residues: Keratin-associated protein 19-6 (58 aa).

Belongs to the KRTAP type 19 family. Interacts with hair keratins.

Its function is as follows. In the hair cortex, hair keratin intermediate filaments are embedded in an interfilamentous matrix, consisting of hair keratin-associated proteins (KRTAP), which are essential for the formation of a rigid and resistant hair shaft through their extensive disulfide bond cross-linking with abundant cysteine residues of hair keratins. The matrix proteins include the high-sulfur and high-glycine-tyrosine keratins. The polypeptide is Keratin-associated protein 19-6 (KRTAP19-6) (Homo sapiens (Human)).